The chain runs to 295 residues: MITELHGIDIRENEPLKHYTYTKVGGPADFLAFPRNHYELSRIVAYANKENMPWLVLGNASNLIVRDGGIRGFVIMFDKLNAVHLNGYTLEAEAGANLIETTKIAKFHSLTGFEFACGIPGSIGGAVFMNAGAYGGEISHIFLSAKVLTPSGEIKTISARDMAFGYRHSAIQETGDIVISAKFALKPGNYDTISQEMNRLNHLRQLKQPLEFPSCGSVFKRPPGHFAGQLIMEANLKGHRIGGVEVSEKHAGFMINVADGTAKDYEDLIAYVIETVENHSGVRLEPEVRIIGENL.

The 166-residue stretch at 23–188 (KVGGPADFLA…ISAKFALKPG (166 aa)) folds into the FAD-binding PCMH-type domain. The active site involves Arg167. Catalysis depends on Ser217, which acts as the Proton donor. Glu287 is a catalytic residue.

This sequence belongs to the MurB family. FAD is required as a cofactor.

The protein localises to the cytoplasm. It catalyses the reaction UDP-N-acetyl-alpha-D-muramate + NADP(+) = UDP-N-acetyl-3-O-(1-carboxyvinyl)-alpha-D-glucosamine + NADPH + H(+). It participates in cell wall biogenesis; peptidoglycan biosynthesis. In terms of biological role, cell wall formation. The polypeptide is UDP-N-acetylenolpyruvoylglucosamine reductase (Streptococcus pyogenes serotype M18 (strain MGAS8232)).